Reading from the N-terminus, the 198-residue chain is tRNA (pseudouridine(54)-N(1))-methyltransferase (198 aa).

S-adenosyl-L-methionine contacts are provided by residues L130, G153, 176–181, and C186; that span reads LSPLEL.

This sequence belongs to the methyltransferase superfamily. TrmY family. Homodimer.

Its subcellular location is the cytoplasm. The catalysed reaction is pseudouridine(54) in tRNA + S-adenosyl-L-methionine = N(1)-methylpseudouridine(54) in tRNA + S-adenosyl-L-homocysteine + H(+). Functionally, specifically catalyzes the N1-methylation of pseudouridine at position 54 (Psi54) in tRNAs. The chain is tRNA (pseudouridine(54)-N(1))-methyltransferase from Methanococcus vannielii (strain ATCC 35089 / DSM 1224 / JCM 13029 / OCM 148 / SB).